The following is a 495-amino-acid chain: UPF0371 protein cgR_2887 (495 aa).

The protein belongs to the UPF0371 family.

This Corynebacterium glutamicum (strain R) protein is UPF0371 protein cgR_2887.